A 275-amino-acid polypeptide reads, in one-letter code: Putative ribonuclease-like protein YfkH (275 aa).

6 helical membrane-spanning segments follow: residues 23-43 (LAYF…TLTA), 83-103 (LLSF…NAIV), 126-146 (IFLT…PVFG), 172-192 (WGVS…IAPN), 199-219 (FVMP…TLFS), and 235-255 (IGGI…IILG).

Its subcellular location is the cell membrane. The polypeptide is Putative ribonuclease-like protein YfkH (yfkH) (Bacillus subtilis (strain 168)).